A 380-amino-acid chain; its full sequence is Two-component response regulator ORR28 (380 aa).

Positions 13–130 (SAMVIDEDKC…TIQNLWQHLD (118 aa)) constitute a Response regulatory domain. 4-aspartylphosphate is present on Asp65. Positions 169–223 (RKYYLMWTPHLQKKFLHALEILGEGQISLMIMDVDNIDRKQISTHLQKHRLQLKK) form a DNA-binding region, myb-like GARP. The tract at residues 225-245 (LSKASFTKGSNEDTSNPSAKN) is disordered. Positions 228–245 (ASFTKGSNEDTSNPSAKN) are enriched in polar residues.

It belongs to the ARR family. Type-B subfamily. Two-component system major event consists of a His-to-Asp phosphorelay between a sensor histidine kinase (HK) and a response regulator (RR). In plants, the His-to-Asp phosphorelay involves an additional intermediate named Histidine-containing phosphotransfer protein (HPt). This multistep phosphorelay consists of a His-Asp-His-Asp sequential transfer of a phosphate group between first a His and an Asp of the HK protein, followed by the transfer to a conserved His of the HPt protein and finally the transfer to an Asp in the receiver domain of the RR protein.

The protein resides in the nucleus. Transcriptional activator that binds specific DNA sequence. Functions as a response regulator involved in His-to-Asp phosphorelay signal transduction system. Phosphorylation of the Asp residue in the receiver domain activates the ability of the protein to promote the transcription of target genes. May directly activate some type-A response regulators in response to cytokinins. The chain is Two-component response regulator ORR28 from Oryza sativa subsp. indica (Rice).